The following is a 75-amino-acid chain: Small ribosomal subunit protein bS16 (75 aa).

This sequence belongs to the bacterial ribosomal protein bS16 family.

The chain is Small ribosomal subunit protein bS16 from Aliarcobacter butzleri (strain RM4018) (Arcobacter butzleri).